The chain runs to 878 residues: Leucine--tRNA ligase (878 aa).

Residues 56–66 (PYPSGKLHMGH) carry the 'HIGH' region motif. Residues 630-634 (KMSKS) carry the 'KMSKS' region motif. Lys-633 lines the ATP pocket.

This sequence belongs to the class-I aminoacyl-tRNA synthetase family.

It localises to the cytoplasm. The enzyme catalyses tRNA(Leu) + L-leucine + ATP = L-leucyl-tRNA(Leu) + AMP + diphosphate. The polypeptide is Leucine--tRNA ligase (Prochlorococcus marinus (strain MIT 9303)).